Here is a 225-residue protein sequence, read N- to C-terminus: Cytochrome c oxidase subunit 2 (225 aa).

Residues 1 to 25 (MSTWMMFMFQESNSFYADNLVSFHN) lie on the Mitochondrial intermembrane side of the membrane. The helical transmembrane segment at 26-47 (LVMMIIIMISTLTIYIIFDLFM) threads the bilayer. Residues 48 to 62 (NKFSNLFLLKNHNIE) lie on the Mitochondrial matrix side of the membrane. Residues 63-82 (IIWTIVPIVILLIICFPSLK) form a helical membrane-spanning segment. The Mitochondrial intermembrane portion of the chain corresponds to 83 to 225 (ILYLIDEIIN…FFLNWINKQN (143 aa)). Residues His-159, Cys-194, Glu-196, Cys-198, His-202, and Met-205 each coordinate Cu cation. Mg(2+) is bound at residue Glu-196.

This sequence belongs to the cytochrome c oxidase subunit 2 family. As to quaternary structure, component of the cytochrome c oxidase (complex IV, CIV), a multisubunit enzyme composed of a catalytic core of 3 subunits and several supernumerary subunits. The complex exists as a monomer or a dimer and forms supercomplexes (SCs) in the inner mitochondrial membrane with ubiquinol-cytochrome c oxidoreductase (cytochrome b-c1 complex, complex III, CIII). Cu cation is required as a cofactor.

The protein localises to the mitochondrion inner membrane. It catalyses the reaction 4 Fe(II)-[cytochrome c] + O2 + 8 H(+)(in) = 4 Fe(III)-[cytochrome c] + 2 H2O + 4 H(+)(out). Component of the cytochrome c oxidase, the last enzyme in the mitochondrial electron transport chain which drives oxidative phosphorylation. The respiratory chain contains 3 multisubunit complexes succinate dehydrogenase (complex II, CII), ubiquinol-cytochrome c oxidoreductase (cytochrome b-c1 complex, complex III, CIII) and cytochrome c oxidase (complex IV, CIV), that cooperate to transfer electrons derived from NADH and succinate to molecular oxygen, creating an electrochemical gradient over the inner membrane that drives transmembrane transport and the ATP synthase. Cytochrome c oxidase is the component of the respiratory chain that catalyzes the reduction of oxygen to water. Electrons originating from reduced cytochrome c in the intermembrane space (IMS) are transferred via the dinuclear copper A center (CU(A)) of subunit 2 and heme A of subunit 1 to the active site in subunit 1, a binuclear center (BNC) formed by heme A3 and copper B (CU(B)). The BNC reduces molecular oxygen to 2 water molecules using 4 electrons from cytochrome c in the IMS and 4 protons from the mitochondrial matrix. The chain is Cytochrome c oxidase subunit 2 (COII) from Apis koschevnikovi (Koschevnikov's honey bee).